The following is a 156-amino-acid chain: 17.7 kDa class II heat shock protein (156 aa).

The region spanning D39–A156 is the sHSP domain.

It belongs to the small heat shock protein (HSP20) family. As to quaternary structure, may form oligomeric structures.

It localises to the cytoplasm. The sequence is that of 17.7 kDa class II heat shock protein (HSP17.7) from Arabidopsis thaliana (Mouse-ear cress).